Consider the following 370-residue polypeptide: Aminomethyltransferase (370 aa).

The protein belongs to the GcvT family. The glycine cleavage system is composed of four proteins: P, T, L and H.

The enzyme catalyses N(6)-[(R)-S(8)-aminomethyldihydrolipoyl]-L-lysyl-[protein] + (6S)-5,6,7,8-tetrahydrofolate = N(6)-[(R)-dihydrolipoyl]-L-lysyl-[protein] + (6R)-5,10-methylene-5,6,7,8-tetrahydrofolate + NH4(+). The glycine cleavage system catalyzes the degradation of glycine. This chain is Aminomethyltransferase, found in Clostridium botulinum (strain Langeland / NCTC 10281 / Type F).